The sequence spans 110 residues: Auxin-responsive protein SAUR71 (110 aa).

This sequence belongs to the ARG7 family. Highly expressed in the steles of roots and hypocotyls.

The protein localises to the cytoplasm. Plays a role in the regulation of cell expansion, root meristem patterning and auxin transport. The polypeptide is Auxin-responsive protein SAUR71 (Arabidopsis thaliana (Mouse-ear cress)).